Consider the following 150-residue polypeptide: uncharacterized protein (150 aa).

The Rhodanese domain maps to 19 to 93; it reads GAQDYVLVDV…SSKRLALRES (75 aa).

This is an uncharacterized protein from Synechococcus elongatus.